A 349-amino-acid chain; its full sequence is Holliday junction branch migration complex subunit RuvB (349 aa).

The large ATPase domain (RuvB-L) stretch occupies residues 1–185 (MSQEKERLIS…FGSIFRLDFY (185 aa)). Residues Leu-24, Arg-25, Gly-66, Lys-69, Thr-70, Thr-71, 132–134 (EDY), Arg-175, Tyr-185, and Arg-222 each bind ATP. Thr-70 contributes to the Mg(2+) binding site. A small ATPAse domain (RuvB-S) region spans residues 186–256 (DEEAIHDIVR…IAAESLACLE (71 aa)). Positions 259–349 (KLGLDEIDHK…QQGLWTENGS (91 aa)) are head domain (RuvB-H). Residues Arg-314 and Arg-319 each contribute to the DNA site.

Belongs to the RuvB family. As to quaternary structure, homohexamer. Forms an RuvA(8)-RuvB(12)-Holliday junction (HJ) complex. HJ DNA is sandwiched between 2 RuvA tetramers; dsDNA enters through RuvA and exits via RuvB. An RuvB hexamer assembles on each DNA strand where it exits the tetramer. Each RuvB hexamer is contacted by two RuvA subunits (via domain III) on 2 adjacent RuvB subunits; this complex drives branch migration. In the full resolvosome a probable DNA-RuvA(4)-RuvB(12)-RuvC(2) complex forms which resolves the HJ.

It is found in the cytoplasm. It carries out the reaction ATP + H2O = ADP + phosphate + H(+). Functionally, the RuvA-RuvB-RuvC complex processes Holliday junction (HJ) DNA during genetic recombination and DNA repair, while the RuvA-RuvB complex plays an important role in the rescue of blocked DNA replication forks via replication fork reversal (RFR). RuvA specifically binds to HJ cruciform DNA, conferring on it an open structure. The RuvB hexamer acts as an ATP-dependent pump, pulling dsDNA into and through the RuvAB complex. RuvB forms 2 homohexamers on either side of HJ DNA bound by 1 or 2 RuvA tetramers; 4 subunits per hexamer contact DNA at a time. Coordinated motions by a converter formed by DNA-disengaged RuvB subunits stimulates ATP hydrolysis and nucleotide exchange. Immobilization of the converter enables RuvB to convert the ATP-contained energy into a lever motion, pulling 2 nucleotides of DNA out of the RuvA tetramer per ATP hydrolyzed, thus driving DNA branch migration. The RuvB motors rotate together with the DNA substrate, which together with the progressing nucleotide cycle form the mechanistic basis for DNA recombination by continuous HJ branch migration. Branch migration allows RuvC to scan DNA until it finds its consensus sequence, where it cleaves and resolves cruciform DNA. The sequence is that of Holliday junction branch migration complex subunit RuvB from Dehalococcoides mccartyi (strain CBDB1).